A 365-amino-acid chain; its full sequence is 3-dehydroquinate synthase (365 aa).

Residues 95-99, 119-120, Lys132, and Lys141 contribute to the NAD(+) site; these read GVVGD and TT. Zn(2+)-binding residues include Glu174, His238, and His255.

This sequence belongs to the sugar phosphate cyclases superfamily. Dehydroquinate synthase family. The cofactor is Co(2+). Requires Zn(2+) as cofactor. NAD(+) is required as a cofactor.

It localises to the cytoplasm. The enzyme catalyses 7-phospho-2-dehydro-3-deoxy-D-arabino-heptonate = 3-dehydroquinate + phosphate. The protein operates within metabolic intermediate biosynthesis; chorismate biosynthesis; chorismate from D-erythrose 4-phosphate and phosphoenolpyruvate: step 2/7. In terms of biological role, catalyzes the conversion of 3-deoxy-D-arabino-heptulosonate 7-phosphate (DAHP) to dehydroquinate (DHQ). The polypeptide is 3-dehydroquinate synthase (Chlorobium chlorochromatii (strain CaD3)).